The chain runs to 151 residues: NADPH-dependent 7-cyano-7-deazaguanine reductase (151 aa).

Catalysis depends on Cys51, which acts as the Thioimide intermediate. The active-site Proton donor is the Asp58. Substrate is bound by residues 73 to 75 (VES) and 92 to 93 (HE).

This sequence belongs to the GTP cyclohydrolase I family. QueF type 1 subfamily.

The protein resides in the cytoplasm. The enzyme catalyses 7-aminomethyl-7-carbaguanine + 2 NADP(+) = 7-cyano-7-deazaguanine + 2 NADPH + 3 H(+). It functions in the pathway tRNA modification; tRNA-queuosine biosynthesis. Its function is as follows. Catalyzes the NADPH-dependent reduction of 7-cyano-7-deazaguanine (preQ0) to 7-aminomethyl-7-deazaguanine (preQ1). This is NADPH-dependent 7-cyano-7-deazaguanine reductase from Bacteroides thetaiotaomicron (strain ATCC 29148 / DSM 2079 / JCM 5827 / CCUG 10774 / NCTC 10582 / VPI-5482 / E50).